A 114-amino-acid chain; its full sequence is Hemerythrin (114 aa).

Fe cation-binding residues include histidine 26, histidine 55, glutamate 59, histidine 74, histidine 78, histidine 102, and aspartate 107.

This sequence belongs to the hemerythrin family. Homooctamer.

Functionally, hemerythrin is a respiratory protein in blood cells of certain marine worms. The oxygen-binding site in each chain contains two iron atoms. In Phascolopsis gouldii (Peanut worm), this protein is Hemerythrin.